Consider the following 983-residue polypeptide: UPF0182 protein CMM_1204 (983 aa).

The next 7 membrane-spanning stretches (helical) occupy residues 16–36 (LAITAAIIAALVIAFFIFAGF), 56–76 (WGAGIALFLVGFLAMAIPVFV), 108–128 (LAMFAIPAVFGLFAGVSASSG), 161–181 (FYHAVVGFASAVVIISMLGVL), 205–225 (IQIAITAGVYFLLQGVSIWLD), 255–275 (AILAGIAGVVALFFIVTAVIG), and 281–301 (IIGTAGLIVASILVGTAYPAI). The span at 699 to 714 (QDLWTTPNDPTATTEA) shows a compositional bias: polar residues. 2 disordered regions span residues 699–718 (QDLWTTPNDPTATTEAGTPA) and 884–936 (DSGA…AQDV). Gly residues predominate over residues 902-918 (GGTGDGATDGATDGGTG). Low complexity predominate over residues 919–933 (STPTPAPTTSPSAPA).

Belongs to the UPF0182 family.

It is found in the cell membrane. The polypeptide is UPF0182 protein CMM_1204 (Clavibacter michiganensis subsp. michiganensis (strain NCPPB 382)).